The sequence spans 291 residues: ATP synthase gamma chain (291 aa).

This sequence belongs to the ATPase gamma chain family. As to quaternary structure, F-type ATPases have 2 components, CF(1) - the catalytic core - and CF(0) - the membrane proton channel. CF(1) has five subunits: alpha(3), beta(3), gamma(1), delta(1), epsilon(1). CF(0) has three main subunits: a, b and c.

It is found in the cell inner membrane. Produces ATP from ADP in the presence of a proton gradient across the membrane. The gamma chain is believed to be important in regulating ATPase activity and the flow of protons through the CF(0) complex. The sequence is that of ATP synthase gamma chain from Sulfurihydrogenibium sp. (strain YO3AOP1).